We begin with the raw amino-acid sequence, 38 residues long: Large ribosomal subunit protein bL36 (38 aa).

Belongs to the bacterial ribosomal protein bL36 family.

The sequence is that of Large ribosomal subunit protein bL36 from Buchnera aphidicola subsp. Schizaphis graminum (strain Sg).